Reading from the N-terminus, the 181-residue chain is Oligoribonuclease (181 aa).

Residues 8–171 enclose the Exonuclease domain; sequence LIWIDLEMTG…DDIRESVAEL (164 aa). Y129 is an active-site residue.

The protein belongs to the oligoribonuclease family.

The protein localises to the cytoplasm. 3'-to-5' exoribonuclease specific for small oligoribonucleotides. This chain is Oligoribonuclease, found in Yersinia enterocolitica serotype O:8 / biotype 1B (strain NCTC 13174 / 8081).